We begin with the raw amino-acid sequence, 1476 residues long: MSKTLKKKKHWLSKVQECAVSWAGPPGDLGAEIRGGAERGEFPYLGRLRDEAGGGGGTCCVVSGKAPSPGDVLLEVNGTPVSGLTNRDTLAVIRHFREPIRLKTVKPGKVINKDLRHYLSLQFQKGSIDHKLQQVIRDNLYLRTIPCTTRAPRDGEVPGVDYNFISVEQFKALEESGALLESGTYDGNFYGTPKPPAEPSPFQPDPVDQVLFDNEFDTESQRKRTTSVSKMERMDSSLPEEEEDEDKEAVNGSGSMETREMHSETSDCWMKTVPSYNQTNSSMDFRNYMMRDENLEPLPKNWEMAYTDTGMIYFIDHNTKTTTWLDPRLCKKAKAPEDCEDGELPYGWEKIEDPQYGTYYVDHLNQKTQFENPVEEAKRKKQLGQAEIHSAKTDVERAHFTRDPSQLKGVLVRASLKKSTMGFGFTIIGGDRPDEFLQVKNVLKDGPAAQDGKIAPGDVIVDINGNCVLGHTHADVVQMFQLVPVNQYVNLTLCRGYPLPDDSEDPVVDIVAATPVINGQSLTKGETCMNTQDFKLGAMVLDQNGKSGQILASDRLNGPSESSEQRASLASSGSSQPELVTIPLIKGPKGFGFAIADSPTGQKVKMILDSQWCQGLQKGDIIKEIYHQNVQNLTHLQVVEVLKQFPVGADVPLLILRGGPCSPTKTAKTKTDTKENSGSLETINEPIPQPMPFPPSIIRSGSPKLDPSEVYLKSKTLYEDKPPNTKDLDVFLRKQESGFGFRVLGGDGPDQSIYIGAIIPLGAAEKDGRLRAADELMCIDGIPVKGKSHKQVLDLMTTAARNGHVLLTVRRKIFYGEKQPEDESHQAFSQNGSPRLNRAELPTRSAPQEAYDVTLQRKENEGFGFVILTSKSKPPPGVIPHKIGRVIDGSPADRCGGLKVGDHISAVNGQSIVDLSHDNIVQLIKDAGVTVTLTVVAEEEHHGPPSGTNSARQSPALQHRPMGQAQANHIPGDRIALEGEIGRDVCSSYRHSWSDHKHLAQPDTAVISVVGSRHNQSLGCYPVELERGPRGFGFSLRGGKEYNMGLFILRLAEDGPAIKDGRIHVGDQIVEINGEPTQGITHTRAIELIQAGGNKVLLLLRPGTGLIPDHGDWDTNSPSSSNVIYDEQPPPLPSSHSASTFEESHVPATEDSLTRVQICEKAEELKDTVQEKKSTLNGSQPEMKYQSVHKTMSKKDPPRGSGHGEKSRLKGENGVTRRGRSASPKKSVNRHSEEHLEKIPRPLKSDPKEKSRDRSLSPRKGESKGRLTIKAGSGQDPYRKDRGRSSSPKKQQKIGGNSLSNTEGKLSEAGSRRAAGHPRDSTEQLPDGREKSGVSRKDLKQSQPGKTRTKSPEKKSSKVDETSLPSKKTSSTAGRVVSEKEKGKKPTAGETSRETVEHTQISAKQLKQEAQEKTALGNADDHKGRESEVTDRCRERAGCTPQSSSLVKKAPITPGPWRVPRANKVTGTTGMADKQL.

The 91-residue stretch at 18 to 108 folds into the PDZ 1 domain; that stretch reads CAVSWAGPPG…PIRLKTVKPG (91 aa). The tract at residues 18–108 is interaction with ADRB1 and TGFA; that stretch reads CAVSWAGPPG…PIRLKTVKPG (91 aa). The 175-residue stretch at 116-290 folds into the Guanylate kinase-like domain; it reads RHYLSLQFQK…SSMDFRNYMM (175 aa). 123 to 130 is an ATP binding site; that stretch reads FQKGSIDH. Positions 184–266 are disordered; it reads TYDGNFYGTP…ETREMHSETS (83 aa). Residues 193 to 204 are compositionally biased toward pro residues; the sequence is PKPPAEPSPFQP. S236 is modified (phosphoserine). Over residues 238-247 the composition is skewed to acidic residues; that stretch reads LPEEEEDEDK. 2 WW domains span residues 296 to 329 and 342 to 375; these read EPLP…DPRL and GELP…NPVE. Positions 413-495 constitute a PDZ 2 domain; sequence RASLKKSTMG…NQYVNLTLCR (83 aa). The interaction with PTEN stretch occupies residues 413 to 495; that stretch reads RASLKKSTMG…NQYVNLTLCR (83 aa). Positions 551 to 575 are disordered; that stretch reads LASDRLNGPSESSEQRASLASSGSS. The segment covering 559-575 has biased composition (polar residues); it reads PSESSEQRASLASSGSS. Residues 581-657 form the PDZ 3 domain; sequence TIPLIKGPKG…GADVPLLILR (77 aa). A Phosphoserine modification is found at S598. The tract at residues 664-691 is disordered; sequence TKTAKTKTDTKENSGSLETINEPIPQPM. A Phosphoserine modification is found at S702. One can recognise a PDZ 4 domain in the interval 729–811; that stretch reads DVFLRKQESG…NGHVLLTVRR (83 aa). An interaction with ADGRB1 region spans residues 729 to 811; that stretch reads DVFLRKQESG…NGHVLLTVRR (83 aa). The segment at 818–844 is disordered; it reads KQPEDESHQAFSQNGSPRLNRAELPTR. Phosphoserine occurs at positions 833 and 916. The region spanning 852–939 is the PDZ 5 domain; the sequence is DVTLQRKENE…TVTLTVVAEE (88 aa). The segment at 852 to 939 is interaction with LPAR2 and GRIN2B; that stretch reads DVTLQRKENE…TVTLTVVAEE (88 aa). The segment at 939-966 is disordered; the sequence is EEHHGPPSGTNSARQSPALQHRPMGQAQ. Residues 946-956 are compositionally biased toward polar residues; that stretch reads SGTNSARQSPA. Residues 1022–1104 form the PDZ 6 domain; sequence PVELERGPRG…KVLLLLRPGT (83 aa). Disordered stretches follow at residues 1109–1151 and 1168–1476; these read DHGD…ATED and TVQE…DKQL. A compositionally biased stretch (polar residues) spans 1114-1123; that stretch reads DTNSPSSSNV. 2 stretches are compositionally biased toward basic and acidic residues: residues 1193-1211 and 1230-1265; these read SKKD…RLKG and RHSE…ESKG. Positions 1285 to 1304 are enriched in polar residues; it reads SSSPKKQQKIGGNSLSNTEG. 2 stretches are compositionally biased toward basic and acidic residues: residues 1317–1340 and 1350–1361; these read HPRD…KDLK and KSPEKKSSKVDE. S1321 is modified (phosphoserine). Residues 1363-1373 are compositionally biased toward polar residues; the sequence is SLPSKKTSSTA. The segment covering 1419–1437 has biased composition (basic and acidic residues); that stretch reads ADDHKGRESEVTDRCRERA.

The protein belongs to the MAGUK family. As to quaternary structure, interacts with ADRB1, ADGRB1, LPAR2/EDG4, GRIN2B, PTEN, and PTPRB. Interacts with unidentified tyrosine phosphorylated proteins. Interacts with FZD4, FZD7, TGFA and VANGL2. Interacts with DLL1. Interacts with PRRG4 (via cytoplasmic domain). In terms of tissue distribution, widely expressed. Colocalizes with TGFA in neurons in the cortex and dentate gyrus, as well as in ependymal cells and some astrocytes (at protein level). Present in lens epithelium.

The protein resides in the cell membrane. Its subcellular location is the cell junction. It localises to the tight junction. The protein localises to the nucleus. In terms of biological role, acts as a scaffolding protein at cell-cell junctions, thereby regulating various cellular and signaling processes. Cooperates with PTEN to modulate the kinase activity of AKT1. Its interaction with PTPRB and tyrosine phosphorylated proteins suggests that it may link receptor tyrosine phosphatase with its substrates at the plasma membrane. In polarized epithelial cells, involved in efficient trafficking of TGFA to the cell surface. Regulates the ability of LPAR2 to activate ERK and RhoA pathways. Regulates the JNK signaling cascade via its interaction with FZD4 and VANGL2. The chain is Membrane-associated guanylate kinase, WW and PDZ domain-containing protein 3 (Magi3) from Mus musculus (Mouse).